Consider the following 290-residue polypeptide: Sodium/potassium-transporting ATPase subunit beta-2 (290 aa).

Over Met1–Phe39 the chain is Cytoplasmic. Residues Ile40 to Ser67 traverse the membrane as a helical; Signal-anchor for type II membrane protein segment. At Glu68–Thr290 the chain is on the extracellular side. Asn96 and Asn118 each carry an N-linked (GlcNAc...) asparagine glycan. The cysteines at positions 129 and 150 are disulfide-linked. Asn153 and Asn159 each carry an N-linked (GlcNAc...) asparagine glycan. Cys160 and Cys177 are joined by a disulfide. 3 N-linked (GlcNAc...) asparagine glycosylation sites follow: Asn193, Asn197, and Asn238. The immunoglobulin-like stretch occupies residues Asn193 to Thr290. Cys200 and Cys261 are joined by a disulfide.

The protein belongs to the X(+)/potassium ATPases subunit beta family. As to quaternary structure, the sodium/potassium-transporting ATPase is composed of a catalytic alpha subunit, an auxiliary non-catalytic beta subunit and an additional regulatory subunit. Interacts with BSG.

It localises to the cell membrane. This is the non-catalytic component of the active enzyme, which catalyzes the hydrolysis of ATP coupled with the exchange of Na(+) and K(+) ions across the plasma membrane. The exact function of the beta-2 subunit is not known. In terms of biological role, mediates cell adhesion of neurons and astrocytes, and promotes neurite outgrowth. In Oryctolagus cuniculus (Rabbit), this protein is Sodium/potassium-transporting ATPase subunit beta-2 (ATP1B2).